The following is a 345-amino-acid chain: MFSSLYPLARASLFKMDAEDAHHLTLRALGAAGRTGLACALSARVPDAPRTVMGLTFRNPVGLAAGLDKDGAAIDGLAALGFGFIEVGTVTPRAQPGNPRPRMFRLPQAEALINRMGFNNHGVDQFVKNVQAARYRGILGLNIGKNADTPIERAADDYLYCLERVYPFASYVTINISSPNTKNLRQLQGAGELDALLAALKDKQQRLADLHGKLVPLALKIAPDLDDEQVKAIADTLLRHKIEAVIATNTTLSRAAVQGLPHADEAGGLSGRPVFDASNEVIRKLHAEVGSAVPIIGVGGIFSGDDARAKLAAGASLVQLYTGFIYRGPALVAECVKAIARERAA.

FMN is bound by residues 65-69 (AGLDK) and Thr89. Substrate is bound at residue Lys69. 114 to 118 (NRMGF) contributes to the substrate binding site. 2 residues coordinate FMN: Asn142 and Asn175. Asn175 serves as a coordination point for substrate. Residue Ser178 is the Nucleophile of the active site. Asn180 is a substrate binding site. The FMN site is built by Lys220 and Thr248. Residue 249–250 (NT) coordinates substrate. FMN contacts are provided by residues Gly271, Gly300, and 321–322 (YT).

It belongs to the dihydroorotate dehydrogenase family. Type 2 subfamily. Monomer. It depends on FMN as a cofactor.

The protein localises to the cell membrane. It catalyses the reaction (S)-dihydroorotate + a quinone = orotate + a quinol. The protein operates within pyrimidine metabolism; UMP biosynthesis via de novo pathway; orotate from (S)-dihydroorotate (quinone route): step 1/1. Catalyzes the conversion of dihydroorotate to orotate with quinone as electron acceptor. This is Dihydroorotate dehydrogenase (quinone) from Burkholderia multivorans (strain ATCC 17616 / 249).